Consider the following 208-residue polypeptide: Putative thymidylate kinase (208 aa).

Residues 12–19 (GIDGTGTS) are defective ATP-binding.

The protein belongs to the thymidylate kinase family.

The catalysed reaction is dTMP + ATP = dTDP + ADP. The chain is Putative thymidylate kinase (tmk) from Treponema pallidum (strain Nichols).